The following is a 71-amino-acid chain: ATP synthase subunit c (71 aa).

Helical transmembrane passes span Val-5 to Ala-25 and Phe-46 to Phe-66.

The protein belongs to the ATPase C chain family. As to quaternary structure, F-type ATPases have 2 components, F(1) - the catalytic core - and F(0) - the membrane proton channel. F(1) has five subunits: alpha(3), beta(3), gamma(1), delta(1), epsilon(1). F(0) has three main subunits: a(1), b(2) and c(10-14). The alpha and beta chains form an alternating ring which encloses part of the gamma chain. F(1) is attached to F(0) by a central stalk formed by the gamma and epsilon chains, while a peripheral stalk is formed by the delta and b chains.

It is found in the cell membrane. Functionally, f(1)F(0) ATP synthase produces ATP from ADP in the presence of a proton or sodium gradient. F-type ATPases consist of two structural domains, F(1) containing the extramembraneous catalytic core and F(0) containing the membrane proton channel, linked together by a central stalk and a peripheral stalk. During catalysis, ATP synthesis in the catalytic domain of F(1) is coupled via a rotary mechanism of the central stalk subunits to proton translocation. Its function is as follows. Key component of the F(0) channel; it plays a direct role in translocation across the membrane. A homomeric c-ring of between 10-14 subunits forms the central stalk rotor element with the F(1) delta and epsilon subunits. The protein is ATP synthase subunit c of Clostridium beijerinckii (strain ATCC 51743 / NCIMB 8052) (Clostridium acetobutylicum).